We begin with the raw amino-acid sequence, 81 residues long: ATP synthase subunit c, chloroplastic (81 aa).

The next 2 helical transmembrane spans lie at 3 to 23 (PLIA…ASIG) and 57 to 77 (LAFM…LLFA).

The protein belongs to the ATPase C chain family. F-type ATPases have 2 components, F(1) - the catalytic core - and F(0) - the membrane proton channel. F(1) has five subunits: alpha(3), beta(3), gamma(1), delta(1), epsilon(1). F(0) has four main subunits: a(1), b(1), b'(1) and c(10-14). The alpha and beta chains form an alternating ring which encloses part of the gamma chain. F(1) is attached to F(0) by a central stalk formed by the gamma and epsilon chains, while a peripheral stalk is formed by the delta, b and b' chains.

It localises to the plastid. The protein resides in the chloroplast thylakoid membrane. In terms of biological role, f(1)F(0) ATP synthase produces ATP from ADP in the presence of a proton or sodium gradient. F-type ATPases consist of two structural domains, F(1) containing the extramembraneous catalytic core and F(0) containing the membrane proton channel, linked together by a central stalk and a peripheral stalk. During catalysis, ATP synthesis in the catalytic domain of F(1) is coupled via a rotary mechanism of the central stalk subunits to proton translocation. Functionally, key component of the F(0) channel; it plays a direct role in translocation across the membrane. A homomeric c-ring of between 10-14 subunits forms the central stalk rotor element with the F(1) delta and epsilon subunits. This is ATP synthase subunit c, chloroplastic from Pisum sativum (Garden pea).